A 394-amino-acid polypeptide reads, in one-letter code: Flap endonuclease 1-A (394 aa).

Residues Met-1–Arg-105 are N-domain. A Mg(2+)-binding site is contributed by Asp-34. Residues Arg-47 and Arg-71 each coordinate DNA. Residues Asp-87, Glu-159, Glu-161, Asp-180, and Asp-182 each coordinate Mg(2+). The tract at residues Asp-123–Tyr-254 is I-domain. A DNA-binding site is contributed by Glu-159. The DNA site is built by Gly-232 and Asp-234. A Mg(2+)-binding site is contributed by Asp-234. Positions Gln-341 to Phe-349 are interaction with PCNA. Positions Lys-356–Lys-375 are disordered.

Belongs to the XPG/RAD2 endonuclease family. FEN1 subfamily. Interacts with PCNA. Three molecules of FEN1 bind to one PCNA trimer with each molecule binding to one PCNA monomer. PCNA stimulates the nuclease activity without altering cleavage specificity. It depends on Mg(2+) as a cofactor. Phosphorylated. Phosphorylation upon DNA damage induces relocalization to the nuclear plasma.

It localises to the nucleus. The protein resides in the nucleolus. It is found in the nucleoplasm. Its subcellular location is the mitochondrion. Structure-specific nuclease with 5'-flap endonuclease and 5'-3' exonuclease activities involved in DNA replication and repair. During DNA replication, cleaves the 5'-overhanging flap structure that is generated by displacement synthesis when DNA polymerase encounters the 5'-end of a downstream Okazaki fragment. It enters the flap from the 5'-end and then tracks to cleave the flap base, leaving a nick for ligation. Also involved in the long patch base excision repair (LP-BER) pathway, by cleaving within the apurinic/apyrimidinic (AP) site-terminated flap. Acts as a genome stabilization factor that prevents flaps from equilibrating into structures that lead to duplications and deletions. Also possesses 5'-3' exonuclease activity on nicked or gapped double-stranded DNA, and exhibits RNase H activity. Also involved in replication and repair of rDNA and in repairing mitochondrial DNA. This is Flap endonuclease 1-A from Laccaria bicolor (strain S238N-H82 / ATCC MYA-4686) (Bicoloured deceiver).